The chain runs to 274 residues: Ubiquinone biosynthesis protein COQ4 homolog, mitochondrial (274 aa).

A mitochondrion-targeting transit peptide spans 1–20; the sequence is MLRQTAFRSMKLNRTPGRYF. Residues 13 to 40 are disordered; that stretch reads NRTPGRYFTTAENMDTGSSQSPPDTEQK. Positions 22 to 36 are enriched in polar residues; it reads TAENMDTGSSQSPPD. The Zn(2+) site is built by His-177, Asp-178, His-181, and Glu-193.

This sequence belongs to the COQ4 family. In terms of assembly, component of a multi-subunit COQ enzyme complex. Requires Zn(2+) as cofactor.

The protein localises to the mitochondrion inner membrane. It catalyses the reaction a 4-hydroxy-3-methoxy-5-(all-trans-polyprenyl)benzoate + H(+) = a 2-methoxy-6-(all-trans-polyprenyl)phenol + CO2. It participates in cofactor biosynthesis; ubiquinone biosynthesis. Functionally, lyase that catalyzes the C1-decarboxylation of 4-hydroxy-3-methoxy-5-(all-trans-polyprenyl)benzoic acid into 2-methoxy-6-(all-trans-polyprenyl)phenol during ubiquinone biosynthesis. The sequence is that of Ubiquinone biosynthesis protein COQ4 homolog, mitochondrial from Aedes aegypti (Yellowfever mosquito).